Consider the following 367-residue polypeptide: Protein SUPPRESSOR OF FRI 4 (367 aa).

The BED-type zinc finger occupies 7-66 (RATEKVWCYYCDREFDDEKILVQHQKAKHFKCHVCHKKLSTASGMVIHVLQVHKENVTKV). The Zn(2+) site is built by C38, C41, H54, and H59. The interval 246–309 (PFSAPLPVGG…PPVIANKAPS (64 aa)) is disordered. Polar residues predominate over residues 273–295 (PNNSIPGGTNAHSYASGPNTSGP).

Homodimer. Component of the transcription activator complex FRI-C composed of FRI, FRL1, SUF4, FLX and FES1. Interacts with LD, ASHH2, FRL1, (via C-terminus) with FRI (via C-terminus), and with SWC6, a component of the SWR1 chromatin-remodeling complex. Binds to MED18 to regulate flowering time; recruits MED18 to FLC promoter. As to expression, expressed in root, shoot apex, leaves, stem and flowers. Expressed in expanding leaves, in the vasculature of fully expanded leaves, in the inflorescence, throughout young floral primordia, in the carpels of older flowers and in fertilized ovules.

It localises to the nucleus. Sequence-specific DNA binding factor that recognizes the 5'-CCAAATTTTAAGTTT-3' sequence. Recruits the FRI-C complex to the FLC promoter. Required for FRI-mediated FLC activation, but has no effect on the expression of MAF1, MAF2, MAF3, MAF5, UFC and CO. Dispensable for the reactivation of FLC in early embryogenesis, but required to maintain high levels of FLC expression in later embryonic and vegetative development. In Arabidopsis thaliana (Mouse-ear cress), this protein is Protein SUPPRESSOR OF FRI 4.